Here is a 655-residue protein sequence, read N- to C-terminus: Tetratricopeptide repeat protein 30 homolog (655 aa).

TPR repeat units lie at residues 10–43, 44–76, 143–176, 178–210, 385–418, 450–484, and 534–567; these read EGHV…ANTR, AGLS…APKE, ADTL…GGFN, LVAY…GMRN, LAAK…YLPV, SIWR…HSDD, and CIVN…GSGN.

The protein belongs to the TTC30/dfy-1/fleer family.

The protein localises to the cell projection. It localises to the cilium. In terms of biological role, required for polyglutamylation of axonemal tubulin in sensory cilia. Plays a role in anterograde intraflagellar transport (IFT), the process by which cilia precursors are transported from the base of the cilium to the site of their incorporation at the tip. This is Tetratricopeptide repeat protein 30 homolog from Drosophila melanogaster (Fruit fly).